Here is a 277-residue protein sequence, read N- to C-terminus: Thiazole synthase (277 aa).

K116 serves as the catalytic Schiff-base intermediate with DXP. Residues G177, 203–204 (AG), and 225–226 (NT) each bind 1-deoxy-D-xylulose 5-phosphate.

This sequence belongs to the ThiG family. In terms of assembly, homotetramer. Forms heterodimers with either ThiH or ThiS.

It localises to the cytoplasm. The enzyme catalyses [ThiS sulfur-carrier protein]-C-terminal-Gly-aminoethanethioate + 2-iminoacetate + 1-deoxy-D-xylulose 5-phosphate = [ThiS sulfur-carrier protein]-C-terminal Gly-Gly + 2-[(2R,5Z)-2-carboxy-4-methylthiazol-5(2H)-ylidene]ethyl phosphate + 2 H2O + H(+). It participates in cofactor biosynthesis; thiamine diphosphate biosynthesis. Functionally, catalyzes the rearrangement of 1-deoxy-D-xylulose 5-phosphate (DXP) to produce the thiazole phosphate moiety of thiamine. Sulfur is provided by the thiocarboxylate moiety of the carrier protein ThiS. In vitro, sulfur can be provided by H(2)S. The chain is Thiazole synthase from Thermosynechococcus vestitus (strain NIES-2133 / IAM M-273 / BP-1).